The primary structure comprises 476 residues: Ribulose bisphosphate carboxylase large chain (476 aa).

Substrate contacts are provided by Asn124 and Thr174. Lys176 functions as the Proton acceptor in the catalytic mechanism. Lys178 is a substrate binding site. Mg(2+) is bound by residues Lys202, Asp204, and Glu205. Lys202 carries the post-translational modification N6-carboxylysine. The active-site Proton acceptor is the His295. The substrate site is built by Arg296, His328, and Ser380.

This sequence belongs to the RuBisCO large chain family. Type I subfamily. As to quaternary structure, heterohexadecamer of 8 large chains and 8 small chains; disulfide-linked. The disulfide link is formed within the large subunit homodimers. It depends on Mg(2+) as a cofactor. Post-translationally, the disulfide bond which can form in the large chain dimeric partners within the hexadecamer appears to be associated with oxidative stress and protein turnover.

It is found in the carboxysome. It catalyses the reaction 2 (2R)-3-phosphoglycerate + 2 H(+) = D-ribulose 1,5-bisphosphate + CO2 + H2O. The enzyme catalyses D-ribulose 1,5-bisphosphate + O2 = 2-phosphoglycolate + (2R)-3-phosphoglycerate + 2 H(+). Its function is as follows. RuBisCO catalyzes two reactions: the carboxylation of D-ribulose 1,5-bisphosphate, the primary event in carbon dioxide fixation, as well as the oxidative fragmentation of the pentose substrate in the photorespiration process. Both reactions occur simultaneously and in competition at the same active site. The protein is Ribulose bisphosphate carboxylase large chain of Acaryochloris marina (strain MBIC 11017).